The sequence spans 156 residues: MPRRREVPKRDILPDPKFGNVEVSKFVNAIMQSGKKSVAERIVYGAFDIITTKGGKDPLEVFSAAMSNVKPMVEVKSRRVGGANYQVPVEVRPARRAALAMRWLRESARKRSEKSMGQRLAAEMLEAAENRGGAVKKRDEVHRMAEANKAFAHFRF.

Belongs to the universal ribosomal protein uS7 family. In terms of assembly, part of the 30S ribosomal subunit. Contacts proteins S9 and S11.

Its function is as follows. One of the primary rRNA binding proteins, it binds directly to 16S rRNA where it nucleates assembly of the head domain of the 30S subunit. Is located at the subunit interface close to the decoding center, probably blocks exit of the E-site tRNA. The chain is Small ribosomal subunit protein uS7 from Dechloromonas aromatica (strain RCB).